Here is an 836-residue protein sequence, read N- to C-terminus: Subtilisin-like protease PIMMS2 (836 aa).

Catalysis depends on charge relay system residues aspartate 155, histidine 222, and serine 414. A disordered region spans residues 802–836 (EKKNKYNNSVLKRNEMKSHNNSQKTPKIIPRKYSR).

It belongs to the peptidase S8 family.

The protein localises to the cell membrane. The catalysed reaction is Hydrolysis of proteins with broad specificity for peptide bonds, and a preference for a large uncharged residue in P1. Hydrolyzes peptide amides.. Probable serine protease which plays a role in ookinete traversal of the mosquito host midgut epithelium. The protein is Subtilisin-like protease PIMMS2 of Plasmodium berghei (strain Anka).